A 272-amino-acid chain; its full sequence is Glutamate racemase (272 aa).

Residues 10–11 (DS) and 42–43 (YG) each bind substrate. Cysteine 74 functions as the Proton donor/acceptor in the catalytic mechanism. Position 75–76 (75–76 (NT)) interacts with substrate. The Proton donor/acceptor role is filled by cysteine 185. 186–187 (TH) is a substrate binding site.

It belongs to the aspartate/glutamate racemases family.

It carries out the reaction L-glutamate = D-glutamate. It functions in the pathway cell wall biogenesis; peptidoglycan biosynthesis. Functionally, provides the (R)-glutamate required for cell wall biosynthesis. In Bacillus velezensis (strain DSM 23117 / BGSC 10A6 / LMG 26770 / FZB42) (Bacillus amyloliquefaciens subsp. plantarum), this protein is Glutamate racemase.